Reading from the N-terminus, the 129-residue chain is Small ribosomal subunit protein uS11 (129 aa).

It belongs to the universal ribosomal protein uS11 family. As to quaternary structure, part of the 30S ribosomal subunit. Interacts with proteins S7 and S18. Binds to IF-3.

Functionally, located on the platform of the 30S subunit, it bridges several disparate RNA helices of the 16S rRNA. Forms part of the Shine-Dalgarno cleft in the 70S ribosome. This chain is Small ribosomal subunit protein uS11, found in Methylorubrum populi (strain ATCC BAA-705 / NCIMB 13946 / BJ001) (Methylobacterium populi).